A 228-amino-acid polypeptide reads, in one-letter code: 7-cyano-7-deazaguanine synthase (228 aa).

An ATP-binding site is contributed by 10-20 (FSGGQDSTTLA). Residues Cys190, Cys205, Cys208, and Cys211 each coordinate Zn(2+).

It belongs to the QueC family. It depends on Zn(2+) as a cofactor.

It catalyses the reaction 7-carboxy-7-deazaguanine + NH4(+) + ATP = 7-cyano-7-deazaguanine + ADP + phosphate + H2O + H(+). It participates in purine metabolism; 7-cyano-7-deazaguanine biosynthesis. Functionally, catalyzes the ATP-dependent conversion of 7-carboxy-7-deazaguanine (CDG) to 7-cyano-7-deazaguanine (preQ(0)). The polypeptide is 7-cyano-7-deazaguanine synthase (Helicobacter pylori (strain HPAG1)).